The following is a 361-amino-acid chain: sn-glycerol-3-phosphate import ATP-binding protein UgpC (361 aa).

The 232-residue stretch at 4-235 (VTLRNVRKTY…PATTFVASFI (232 aa)) folds into the ABC transporter domain. Residue 37–44 (GPSGCGKS) participates in ATP binding.

Belongs to the ABC transporter superfamily. sn-glycerol-3-phosphate importer (TC 3.A.1.1.3) family. In terms of assembly, the complex is composed of two ATP-binding proteins (UgpC), two transmembrane proteins (UgpA and UgpE) and a solute-binding protein (UgpB).

It localises to the cell inner membrane. It carries out the reaction sn-glycerol 3-phosphate(out) + ATP + H2O = sn-glycerol 3-phosphate(in) + ADP + phosphate + H(+). Functionally, part of the ABC transporter complex UgpBAEC involved in sn-glycerol-3-phosphate (G3P) import. Responsible for energy coupling to the transport system. The protein is sn-glycerol-3-phosphate import ATP-binding protein UgpC of Rhodopseudomonas palustris (strain BisA53).